Here is a 507-residue protein sequence, read N- to C-terminus: L-threonine dehydratase biosynthetic IlvA (507 aa).

Lys-52 is subject to N6-(pyridoxal phosphate)lysine. Pyridoxal 5'-phosphate contacts are provided by residues Asn-79, 182 to 186 (GGGGL), and Ser-309. ACT-like domains lie at 333–404 (AVFA…DLTH) and 427–498 (RLFR…EESA).

This sequence belongs to the serine/threonine dehydratase family. Homotetramer. Pyridoxal 5'-phosphate is required as a cofactor.

It catalyses the reaction L-threonine = 2-oxobutanoate + NH4(+). It participates in amino-acid biosynthesis; L-isoleucine biosynthesis; 2-oxobutanoate from L-threonine: step 1/1. Catalyzes the anaerobic formation of alpha-ketobutyrate and ammonia from threonine in a two-step reaction. The first step involved a dehydration of threonine and a production of enamine intermediates (aminocrotonate), which tautomerizes to its imine form (iminobutyrate). Both intermediates are unstable and short-lived. The second step is the nonenzymatic hydrolysis of the enamine/imine intermediates to form 2-ketobutyrate and free ammonia. In the low water environment of the cell, the second step is accelerated by RidA. In Burkholderia multivorans (strain ATCC 17616 / 249), this protein is L-threonine dehydratase biosynthetic IlvA (ilvA).